The sequence spans 227 residues: Probable methylthioribulose-1-phosphate dehydratase (227 aa).

Position 87 (Cys87) interacts with substrate. 2 residues coordinate Zn(2+): His105 and His107. Glu129 acts as the Proton donor/acceptor in catalysis. His185 contacts Zn(2+).

Belongs to the aldolase class II family. MtnB subfamily. Zn(2+) serves as cofactor.

It localises to the cytoplasm. It catalyses the reaction 5-(methylsulfanyl)-D-ribulose 1-phosphate = 5-methylsulfanyl-2,3-dioxopentyl phosphate + H2O. The protein operates within amino-acid biosynthesis; L-methionine biosynthesis via salvage pathway; L-methionine from S-methyl-5-thio-alpha-D-ribose 1-phosphate: step 2/6. In terms of biological role, catalyzes the dehydration of methylthioribulose-1-phosphate (MTRu-1-P) into 2,3-diketo-5-methylthiopentyl-1-phosphate (DK-MTP-1-P). This chain is Probable methylthioribulose-1-phosphate dehydratase, found in Drosophila erecta (Fruit fly).